A 480-amino-acid polypeptide reads, in one-letter code: Aspartyl/glutamyl-tRNA(Asn/Gln) amidotransferase subunit B (480 aa).

Belongs to the GatB/GatE family. GatB subfamily. As to quaternary structure, heterotrimer of A, B and C subunits.

It carries out the reaction L-glutamyl-tRNA(Gln) + L-glutamine + ATP + H2O = L-glutaminyl-tRNA(Gln) + L-glutamate + ADP + phosphate + H(+). The enzyme catalyses L-aspartyl-tRNA(Asn) + L-glutamine + ATP + H2O = L-asparaginyl-tRNA(Asn) + L-glutamate + ADP + phosphate + 2 H(+). Functionally, allows the formation of correctly charged Asn-tRNA(Asn) or Gln-tRNA(Gln) through the transamidation of misacylated Asp-tRNA(Asn) or Glu-tRNA(Gln) in organisms which lack either or both of asparaginyl-tRNA or glutaminyl-tRNA synthetases. The reaction takes place in the presence of glutamine and ATP through an activated phospho-Asp-tRNA(Asn) or phospho-Glu-tRNA(Gln). The sequence is that of Aspartyl/glutamyl-tRNA(Asn/Gln) amidotransferase subunit B from Streptococcus pneumoniae (strain Hungary19A-6).